The chain runs to 146 residues: Leghemoglobin (146 aa).

Residues 3-146 (AFTEKQEALV…FAAGIKKAYA (144 aa)) enclose the Globin domain. Tyrosine 26 and tyrosine 31 each carry nitrated tyrosine. Residue serine 46 coordinates heme b. At serine 46 the chain carries Phosphoserine. Histidine 62 contributes to the O2 binding site. Histidine 93 and lysine 96 together coordinate heme b. Residue tyrosine 134 is modified to Nitrated tyrosine.

This sequence belongs to the plant globin family. In terms of assembly, monomer. Post-translationally, nitrated mainly at Tyr-31 and, to a lower extent, at Tyr-26 and Tyr-134, in effective nodules and particularly in hypoxic conditions; this mechanism may play a protective role in the symbiosis by buffering toxic peroxynitrite NO(2)(-). Nitration level decrease during nodule senescence. Phosphorylation at Ser-46 disrupts the molecular environment of its porphyrin ring oxygen binding pocket, thus leading to a reduced oxygen consumption and to the delivery of oxygen O(2) to symbiosomes. As to expression, root nodules.

Its subcellular location is the cytoplasm. It localises to the cytosol. The protein localises to the nucleus. In terms of biological role, leghemoglobin that reversibly binds oxygen O(2) through a pentacoordinated heme iron. In root nodules, facilitates the diffusion of oxygen to the bacteroids while preventing the bacterial nitrogenase from being inactivated by buffering dioxygen, nitric oxide and carbon monoxide, and promoting the formation of reactive oxygen species (ROS, e.g. H(2)O(2)). This role is essential for symbiotic nitrogen fixation (SNF). This chain is Leghemoglobin, found in Phaseolus vulgaris (Kidney bean).